The primary structure comprises 620 residues: UvrABC system protein C (620 aa).

The GIY-YIG domain maps to 13-92 (DKPGVYIMKN…IKKYSPRYNI (80 aa)). Positions 204-239 (TSIIKKLKLEMEKAAEELEFEKAAKIRDRILAIELI) constitute a UVR domain.

The protein belongs to the UvrC family. As to quaternary structure, interacts with UvrB in an incision complex.

It is found in the cytoplasm. In terms of biological role, the UvrABC repair system catalyzes the recognition and processing of DNA lesions. UvrC both incises the 5' and 3' sides of the lesion. The N-terminal half is responsible for the 3' incision and the C-terminal half is responsible for the 5' incision. This chain is UvrABC system protein C, found in Clostridium perfringens (strain 13 / Type A).